We begin with the raw amino-acid sequence, 106 residues long: Small ribosomal subunit protein uS10 (106 aa).

This sequence belongs to the universal ribosomal protein uS10 family. Part of the 30S ribosomal subunit.

In terms of biological role, involved in the binding of tRNA to the ribosomes. This chain is Small ribosomal subunit protein uS10, found in Pyrobaculum aerophilum (strain ATCC 51768 / DSM 7523 / JCM 9630 / CIP 104966 / NBRC 100827 / IM2).